The primary structure comprises 306 residues: Pantothenate kinase (306 aa).

ATP is bound at residue 91 to 98 (GSVAVGKS).

Belongs to the prokaryotic pantothenate kinase family.

It is found in the cytoplasm. It carries out the reaction (R)-pantothenate + ATP = (R)-4'-phosphopantothenate + ADP + H(+). Its pathway is cofactor biosynthesis; coenzyme A biosynthesis; CoA from (R)-pantothenate: step 1/5. This is Pantothenate kinase from Streptococcus pyogenes serotype M49 (strain NZ131).